A 500-amino-acid chain; its full sequence is Glucose-6-phosphate 1-dehydrogenase (500 aa).

Residues 18-25 (GASGDLSK), Arg-52, and Lys-155 contribute to the NADP(+) site. D-glucose 6-phosphate is bound by residues Lys-155, 185-189 (HYLGK), Glu-223, and Asp-242. His-247 serves as the catalytic Proton acceptor. Lys-338 is an NADP(+) binding site. Lys-341 contributes to the D-glucose 6-phosphate binding site. NADP(+) is bound by residues Lys-347, Arg-351, and Arg-373. D-glucose 6-phosphate is bound at residue Gln-375. Residues 381–383 (YFK), 401–403 (DLT), and Tyr-483 each bind NADP(+).

Belongs to the glucose-6-phosphate dehydrogenase family.

Its subcellular location is the cytoplasm. It localises to the cytosol. It carries out the reaction D-glucose 6-phosphate + NADP(+) = 6-phospho-D-glucono-1,5-lactone + NADPH + H(+). It functions in the pathway carbohydrate degradation; pentose phosphate pathway; D-ribulose 5-phosphate from D-glucose 6-phosphate (oxidative stage): step 1/3. Its function is as follows. Catalyzes the rate-limiting step of the oxidative pentose-phosphate pathway, which represents a route for the dissimilation of carbohydrates besides glycolysis. The main function of this enzyme is to provide reducing power (NADPH) and pentose phosphates for fatty acid and nucleic acid synthesis. This is Glucose-6-phosphate 1-dehydrogenase from Schizosaccharomyces pombe (strain 972 / ATCC 24843) (Fission yeast).